Consider the following 197-residue polypeptide: 3-isopropylmalate dehydratase small subunit (197 aa).

This sequence belongs to the LeuD family. LeuD type 1 subfamily. Heterodimer of LeuC and LeuD.

It carries out the reaction (2R,3S)-3-isopropylmalate = (2S)-2-isopropylmalate. The protein operates within amino-acid biosynthesis; L-leucine biosynthesis; L-leucine from 3-methyl-2-oxobutanoate: step 2/4. Functionally, catalyzes the isomerization between 2-isopropylmalate and 3-isopropylmalate, via the formation of 2-isopropylmaleate. The protein is 3-isopropylmalate dehydratase small subunit of Streptomyces griseus subsp. griseus (strain JCM 4626 / CBS 651.72 / NBRC 13350 / KCC S-0626 / ISP 5235).